Here is a 158-residue protein sequence, read N- to C-terminus: Small ribosomal subunit protein uS9 (158 aa).

Belongs to the universal ribosomal protein uS9 family.

The polypeptide is Small ribosomal subunit protein uS9 (Nitrobacter winogradskyi (strain ATCC 25391 / DSM 10237 / CIP 104748 / NCIMB 11846 / Nb-255)).